A 313-amino-acid chain; its full sequence is Homoserine O-succinyltransferase (313 aa).

Cys-142 (acyl-thioester intermediate) is an active-site residue. Residues Lys-163 and Ser-192 each coordinate substrate. Residue His-235 is the Proton acceptor of the active site. Residue Glu-237 is part of the active site. Residue Arg-249 participates in substrate binding.

This sequence belongs to the MetA family.

The protein localises to the cytoplasm. The enzyme catalyses L-homoserine + succinyl-CoA = O-succinyl-L-homoserine + CoA. It functions in the pathway amino-acid biosynthesis; L-methionine biosynthesis via de novo pathway; O-succinyl-L-homoserine from L-homoserine: step 1/1. In terms of biological role, transfers a succinyl group from succinyl-CoA to L-homoserine, forming succinyl-L-homoserine. The sequence is that of Homoserine O-succinyltransferase from Shewanella sp. (strain ANA-3).